Consider the following 290-residue polypeptide: UPF0761 membrane protein YihY (290 aa).

Transmembrane regions (helical) follow at residues 44 to 64 (LLSLVPLIAVVFALFAAFPMF), 104 to 124 (VGACGLIVTALLLMYAIDSAL), 140 to 160 (FAVYWMILTLGPLLAGASLAI), 183 to 203 (ILPLLLSWISFWLLYSIVPTT), 210 to 230 (ALVGAFVAALLFEAGKKGFAL), and 244 to 264 (VLAVIPILFVWVYWTWCIVLL).

The protein belongs to the UPF0761 family.

The protein resides in the cell inner membrane. The chain is UPF0761 membrane protein YihY from Salmonella agona (strain SL483).